The chain runs to 599 residues: UvrABC system protein C (599 aa).

Residues 19-95 (ESTGVYIFYD…IKKYRPIMNV (77 aa)) enclose the GIY-YIG domain. Residues 206 to 241 (EEIIEKLYDQMQEYSKNLEFEKAAKIRDKIRLLQNL) enclose the UVR domain.

It belongs to the UvrC family. Interacts with UvrB in an incision complex.

It localises to the cytoplasm. Its function is as follows. The UvrABC repair system catalyzes the recognition and processing of DNA lesions. UvrC both incises the 5' and 3' sides of the lesion. The N-terminal half is responsible for the 3' incision and the C-terminal half is responsible for the 5' incision. In Dictyoglomus thermophilum (strain ATCC 35947 / DSM 3960 / H-6-12), this protein is UvrABC system protein C.